The chain runs to 522 residues: DNA primase DnaG (522 aa).

The Toprim domain occupies D171–I257. Mg(2+)-binding residues include E177, D219, and D221.

Belongs to the archaeal DnaG primase family. Forms a ternary complex with MCM helicase and DNA. Component of the archaeal exosome complex. Requires Mg(2+) as cofactor.

It catalyses the reaction ssDNA + n NTP = ssDNA/pppN(pN)n-1 hybrid + (n-1) diphosphate.. RNA polymerase that catalyzes the synthesis of short RNA molecules used as primers for DNA polymerase during DNA replication. Also part of the exosome, which is a complex involved in RNA degradation. Acts as a poly(A)-binding protein that enhances the interaction between heteromeric, adenine-rich transcripts and the exosome. This chain is DNA primase DnaG, found in Methanosarcina mazei (strain ATCC BAA-159 / DSM 3647 / Goe1 / Go1 / JCM 11833 / OCM 88) (Methanosarcina frisia).